A 680-amino-acid polypeptide reads, in one-letter code: Tumor protein 63 (680 aa).

The interval Met1 to Met107 is transcription activation. Over residues Gln123–Asp157 the composition is skewed to polar residues. The disordered stretch occupies residues Gln123–Tyr171. A DNA-binding region spans residues Asp170 to Gln362. Zn(2+) is bound by residues Cys244, His247, Cys308, and Cys312. The span at Asp351–Arg360 shows a compositional bias: basic and acidic residues. 2 disordered regions span residues Asp351–Arg393 and Tyr435–Met472. An interaction with HIPK2 region spans residues Arg352 to Thr388. Polar residues-rich tracts occupy residues Lys361–Gly371 and Arg379–Ser389. The tract at residues Arg394–His443 is oligomerization. Residues Gln437–Gln450 show a composition bias toward low complexity. The span at Thr451 to Met472 shows a compositional bias: polar residues. Residues Pro541–Leu607 form the SAM domain. Residues Phe610–Glu680 are transactivation inhibition. Lys676 participates in a covalent cross-link: Glycyl lysine isopeptide (Lys-Gly) (interchain with G-Cter in SUMO).

This sequence belongs to the p53 family. Binds DNA as a homotetramer. Isoform composition of the tetramer may determine transactivation activity. Isoforms Alpha and Gamma interact with HIPK2. Interacts with SSRP1, leading to stimulate coactivator activity. Isoform 1 and isoform 2 interact with WWP1. Interacts with PDS5A. Isoform 5 (via activation domain) interacts with NOC2L. Zn(2+) is required as a cofactor. May be sumoylated. Post-translationally, ubiquitinated. Polyubiquitination involves WWP1 and leads to proteasomal degradation of this protein. In terms of tissue distribution, widely expressed, notably in heart, kidney, placenta, prostate, skeletal muscle, testis and thymus, although the precise isoform varies according to tissue type. Progenitor cell layers of skin, breast, eye and prostate express high levels of DeltaN-type isoforms. Isoform 10 is predominantly expressed in skin squamous cell carcinomas, but not in normal skin tissues.

It is found in the nucleus. Acts as a sequence specific DNA binding transcriptional activator or repressor. The isoforms contain a varying set of transactivation and auto-regulating transactivation inhibiting domains thus showing an isoform specific activity. Isoform 2 activates RIPK4 transcription. May be required in conjunction with TP73/p73 for initiation of p53/TP53 dependent apoptosis in response to genotoxic insults and the presence of activated oncogenes. Involved in Notch signaling by probably inducing JAG1 and JAG2. Plays a role in the regulation of epithelial morphogenesis. The ratio of DeltaN-type and TA*-type isoforms may govern the maintenance of epithelial stem cell compartments and regulate the initiation of epithelial stratification from the undifferentiated embryonal ectoderm. Required for limb formation from the apical ectodermal ridge. Activates transcription of the p21 promoter. The chain is Tumor protein 63 (TP63) from Homo sapiens (Human).